We begin with the raw amino-acid sequence, 112 residues long: Large ribosomal subunit protein uL18 (112 aa).

The protein belongs to the universal ribosomal protein uL18 family. As to quaternary structure, part of the 50S ribosomal subunit; part of the 5S rRNA/L5/L18/L25 subcomplex. Contacts the 5S and 23S rRNAs.

This is one of the proteins that bind and probably mediate the attachment of the 5S RNA into the large ribosomal subunit, where it forms part of the central protuberance. The chain is Large ribosomal subunit protein uL18 from Thermus thermophilus (strain ATCC BAA-163 / DSM 7039 / HB27).